The sequence spans 341 residues: Farnesyl pyrophosphate synthase 2 (341 aa).

Positions 46, 49, and 85 each coordinate isopentenyl diphosphate. Mg(2+) is bound by residues D92 and D96. Position 101 (R101) interacts with dimethylallyl diphosphate. Residue R102 coordinates isopentenyl diphosphate. Dimethylallyl diphosphate contacts are provided by K189, T190, Q228, K245, and K254.

It belongs to the FPP/GGPP synthase family. It depends on Mg(2+) as a cofactor. In terms of tissue distribution, mainly expressed in trichomes, roots and flowers, and, to a lower extent, in leaves and stems.

The protein localises to the cytoplasm. Its subcellular location is the nucleus. The enzyme catalyses isopentenyl diphosphate + dimethylallyl diphosphate = (2E)-geranyl diphosphate + diphosphate. It catalyses the reaction isopentenyl diphosphate + (2E)-geranyl diphosphate = (2E,6E)-farnesyl diphosphate + diphosphate. The protein operates within isoprenoid biosynthesis; farnesyl diphosphate biosynthesis; farnesyl diphosphate from geranyl diphosphate and isopentenyl diphosphate: step 1/1. It functions in the pathway sesquiterpene biosynthesis. It participates in isoprenoid biosynthesis; geranyl diphosphate biosynthesis; geranyl diphosphate from dimethylallyl diphosphate and isopentenyl diphosphate: step 1/1. Catalyzes the sequential condensation of isopentenyl pyrophosphate with the allylic pyrophosphates, dimethylallyl pyrophosphate, and then with the resultant geranylpyrophosphate to the ultimate product farnesyl pyrophosphate. The sequence is that of Farnesyl pyrophosphate synthase 2 from Cannabis sativa (Hemp).